The sequence spans 475 residues: Tetratricopeptide repeat protein 29 (475 aa).

TPR repeat units follow at residues 92-131 (DALR…EDAE), 136-173 (FEDV…AQLI), 182-215 (AEAH…TQGR), 234-267 (LRTY…AKEG), 274-307 (AEAS…STDL), 314-347 (GRGY…ARNN), and 354-387 (VRAS…TVEL). Positions 437-475 (IEPDPVTEEFRGSTVEAVSQNSERLEELSRFPGDQKNET) are disordered. Over residues 459–475 (ERLEELSRFPGDQKNET) the composition is skewed to basic and acidic residues.

As to expression, expressed in spermatozoa (at protein level).

It is found in the cytoplasm. Its subcellular location is the cytoskeleton. The protein resides in the flagellum axoneme. Its function is as follows. Axonemal protein which is implicated in axonemal and/or peri-axonemal structure assembly and regulates flagellum assembly and beating and therefore sperm motility. The protein is Tetratricopeptide repeat protein 29 (TTC29) of Homo sapiens (Human).